Here is a 498-residue protein sequence, read N- to C-terminus: Glycerol kinase (498 aa).

T12 is an ADP binding site. ATP is bound by residues T12, T13, and S14. T12 serves as a coordination point for sn-glycerol 3-phosphate. Residue R16 coordinates ADP. The sn-glycerol 3-phosphate site is built by R82, E83, Y134, and D241. Positions 82, 83, 134, 241, and 242 each coordinate glycerol. ADP contacts are provided by T263 and G310. ATP contacts are provided by T263, G310, Q314, and G411. Positions 411 and 415 each coordinate ADP.

It belongs to the FGGY kinase family.

It carries out the reaction glycerol + ATP = sn-glycerol 3-phosphate + ADP + H(+). It participates in polyol metabolism; glycerol degradation via glycerol kinase pathway; sn-glycerol 3-phosphate from glycerol: step 1/1. With respect to regulation, inhibited by fructose 1,6-bisphosphate (FBP). Functionally, key enzyme in the regulation of glycerol uptake and metabolism. Catalyzes the phosphorylation of glycerol to yield sn-glycerol 3-phosphate. In Herminiimonas arsenicoxydans, this protein is Glycerol kinase.